The following is a 364-amino-acid chain: Fructose-bisphosphate aldolase B (364 aa).

An N-acetylalanine modification is found at Ala-2. Lys-13 bears the N6-succinyllysine mark. Ser-36 carries the phosphoserine modification. Position 39 is a phosphothreonine (Thr-39). Arg-43 provides a ligand contact to beta-D-fructose 1,6-bisphosphate. Position 89 is a phosphoserine (Ser-89). Phosphothreonine is present on Thr-119. Residue Lys-121 is modified to N6-succinyllysine. Ser-132 carries the phosphoserine modification. Glu-188 acts as the Proton acceptor in catalysis. Phosphoserine is present on Ser-206. Lys-230 acts as the Schiff-base intermediate with dihydroxyacetone-P in catalysis. 4 positions are modified to phosphoserine: Ser-272, Ser-276, Ser-299, and Ser-301. 272-274 (SGG) serves as a coordination point for beta-D-fructose 1,6-bisphosphate. A beta-D-fructose 1,6-bisphosphate-binding site is contributed by Arg-304. Ser-309 is subject to Phosphoserine. An N6-succinyllysine modification is found at Lys-317.

This sequence belongs to the class I fructose-bisphosphate aldolase family. As to quaternary structure, homotetramer. Interacts with BBS1, BBS2, BBS4 and BBS7. Forms a ternary complex with G6PD and TP53; this interaction is direct.

Its subcellular location is the cytoplasm. The protein resides in the cytosol. It localises to the cytoskeleton. It is found in the microtubule organizing center. The protein localises to the centrosome. Its subcellular location is the centriolar satellite. It carries out the reaction beta-D-fructose 1,6-bisphosphate = D-glyceraldehyde 3-phosphate + dihydroxyacetone phosphate. The catalysed reaction is beta-D-fructose 1-phosphate = D-glyceraldehyde + dihydroxyacetone phosphate. It functions in the pathway carbohydrate degradation; glycolysis; D-glyceraldehyde 3-phosphate and glycerone phosphate from D-glucose: step 4/4. The protein operates within carbohydrate biosynthesis; gluconeogenesis. Its pathway is carbohydrate metabolism; fructose metabolism. In terms of biological role, catalyzes the aldol cleavage of fructose 1,6-biphosphate to form two triosephosphates dihydroxyacetone phosphate and D-glyceraldehyde 3-phosphate in glycolysis as well as the reverse stereospecific aldol addition reaction in gluconeogenesis. In fructolysis, metabolizes fructose 1-phosphate derived from the phosphorylation of dietary fructose by fructokinase into dihydroxyacetone phosphate and D-glyceraldehyde. Acts as an adapter independently of its enzymatic activity, exerts a tumor suppressor role by stabilizing the ternary complex with G6PD and TP53 to inhibit G6PD activity and keep oxidative pentose phosphate metabolism in check. This Mus musculus (Mouse) protein is Fructose-bisphosphate aldolase B.